A 160-amino-acid chain; its full sequence is Calsequestrin-2 (160 aa).

This sequence belongs to the calsequestrin family. Monomer, homodimer and homooligomer. Mostly monomeric in the absence of calcium. Forms higher oligomers in a calcium-dependent manner. Dimers associate to form tetramers, that then form linear homomer chains. Interacts with ASPH and TRDN. Post-translationally, phosphorylation in the C-terminus, probably by CK2, moderately increases calcium buffering capacity. N-glycosylated.

The protein localises to the sarcoplasmic reticulum lumen. In terms of biological role, calsequestrin is a high-capacity, moderate affinity, calcium-binding protein and thus acts as an internal calcium store in muscle. Calcium ions are bound by clusters of acidic residues at the protein surface, especially at the interface between subunits. Can bind around 60 Ca(2+) ions. Regulates the release of lumenal Ca(2+) via the calcium release channel RYR2; this plays an important role in triggering muscle contraction. Plays a role in excitation-contraction coupling in the heart and in regulating the rate of heart beats. The protein is Calsequestrin-2 (CASQ2) of Sus scrofa (Pig).